Reading from the N-terminus, the 320-residue chain is MRSAQVYRWQIPMDAGVVLRDRRLKTRDGLYVCLREGEREGWGEISPLPGFSQETWEEAQSVLLAWVNNWLAGDCELPQMTSVAFGVSCALAELADTLPQAANYRAAPLCNGDPDDLILKLADMPGEKVAKVKVGLYEAVRDGMVVNLLLEAIPDLHLRLDANRAWTPLKGQQFAKYVNPDYRHRIAFLEEPCKTRDDSRAFARETGIAIAWDESLREPDFAFVAEEGVRAVVIKPTLTGSLEKVREQVQAAHALGLTAVISSSIESSLGLTQLARIAAWLTPDTIPGLDTLDLMQAQQVRRWPGSTLPVVEVDALERLL.

Catalysis depends on lysine 133, which acts as the Proton donor. Positions 161, 190, and 213 each coordinate Mg(2+). Lysine 235 (proton acceptor) is an active-site residue.

The protein belongs to the mandelate racemase/muconate lactonizing enzyme family. MenC type 1 subfamily. Requires a divalent metal cation as cofactor.

The catalysed reaction is (1R,6R)-6-hydroxy-2-succinyl-cyclohexa-2,4-diene-1-carboxylate = 2-succinylbenzoate + H2O. Its pathway is quinol/quinone metabolism; 1,4-dihydroxy-2-naphthoate biosynthesis; 1,4-dihydroxy-2-naphthoate from chorismate: step 4/7. The protein operates within quinol/quinone metabolism; menaquinone biosynthesis. Functionally, converts 2-succinyl-6-hydroxy-2,4-cyclohexadiene-1-carboxylate (SHCHC) to 2-succinylbenzoate (OSB). The polypeptide is o-succinylbenzoate synthase (Escherichia coli O9:H4 (strain HS)).